The primary structure comprises 70 residues: Conotoxin Im23.4 (70 aa).

A signal peptide spans 1–22 (MIMRMTLTLFVLVVMTAASASG). The propeptide occupies 23–30 (DALTEAKR). 3 disulfides stabilise this stretch: Cys-34/Cys-41, Cys-45/Cys-53, and Cys-54/Cys-69.

The protein belongs to the conotoxin K superfamily. Expressed by the venom duct.

It localises to the secreted. Probable neurotoxin. The protein is Conotoxin Im23.4 of Conus imperialis (Imperial cone).